Reading from the N-terminus, the 405-residue chain is Nuclear hormone receptor family member nhr-199 (405 aa).

The nuclear receptor DNA-binding region spans 20 to 111 (IPYCLICSEV…MGMQRSSVQQ (92 aa)). 2 consecutive NR C4-type zinc fingers follow at residues 23–44 (CLICSEVADGNHFGVAAACRAC) and 60–94 (CGRNGQCFFLSCKFLLVGFQISPLSSDARSMCKAC). The region spanning 126–376 (RGKPVLNKLR…PFSRIHGNQK (251 aa)) is the NR LBD domain.

Belongs to the nuclear hormone receptor family.

Its subcellular location is the nucleus. Functionally, orphan nuclear receptor. This chain is Nuclear hormone receptor family member nhr-199 (nhr-199), found in Caenorhabditis elegans.